Consider the following 630-residue polypeptide: Neuronal acetylcholine receptor subunit alpha-4 (630 aa).

A signal peptide spans 1–30 (MANSGTGAPPPLLLLPLLLLLGTGLLPASS). Topologically, residues 32–249 (IETRAHAEER…IIRRLPLFYT (218 aa)) are extracellular. The N-linked (GlcNAc...) asparagine glycan is linked to Asn-59. The Ca(2+) site is built by Val-78 and Glu-80. 2 N-linked (GlcNAc...) asparagine glycosylation sites follow: Asn-109 and Asn-176. 2 disulfide bridges follow: Cys-163/Cys-177 and Cys-227/Cys-228. The helical transmembrane segment at 250 to 270 (INLIIPCLLISCLTVLVFYLP) threads the bilayer. Residue Cys-273 is the site of S-palmitoyl cysteine attachment. The next 2 membrane-spanning stretches (helical) occupy residues 279 to 299 (LCIS…EIIP) and 313 to 333 (LLFT…VLNV). At 334–604 (HHRSPRTHTM…WKYVAMVIDR (271 aa)) the chain is on the cytoplasmic side. Disordered stretches follow at residues 418 to 463 (TAVE…SGAP) and 505 to 526 (SLAD…SQLP). At Ser-428 the chain carries Phosphoserine. The span at 434-443 (PDLKTSEVEK) shows a compositional bias: basic and acidic residues. Over residues 447 to 457 (CPSPGSCPPPK) the composition is skewed to pro residues. Residues Ser-542 and Ser-545 each carry the phosphoserine modification. Residues 605–625 (IFLWMFIIVCLLGTVGLFLPP) form a helical membrane-spanning segment.

This sequence belongs to the ligand-gated ion channel (TC 1.A.9) family. Acetylcholine receptor (TC 1.A.9.1) subfamily. Alpha-4/CHRNA4 sub-subfamily. Neuronal AChR is composed of two different types of subunits: alpha and beta. CHRNA4 forms heteropentameric neuronal acetylcholine receptors with CHRNB2 and CHRNB4, as well as CHRNA5 and CHRNB3 as accesory subunits. Found in two major stoichiometric forms, LS (low agonist sensitivity): (CHRNA4)3:(CHRNB2)2 and HS (high agonist sensitivity): (CHRNA4)2:(CHRNB2)3, the two stoichiometric forms differ in their unitary conductance, calcium permeability, ACh sensitivity and potentiation by divalent cation. Cells produce predominantly an (CHRNA4)3:(CHRNB2)2 nAChR. The (CHRNA4)2:(CHRNB2)3 expression is selectively up-regulated by nicotine and has lower single channel conductance and calcium permeability. In the striatum, also forms CHRNA4:CHRNA6:CHRNB2 complexes. Also found in the stoichiometric form: (CHRNA4:CHRNB2)2:CHRNB3. Interacts with RIC3; which is required for proper folding and assembly. Interacts with LYPD6. In terms of tissue distribution, in various regions of the central nervous system. Expressed in hippocampal neurons.

The protein localises to the presynaptic cell membrane. Its subcellular location is the cell membrane. It catalyses the reaction Ca(2+)(in) = Ca(2+)(out). It carries out the reaction K(+)(in) = K(+)(out). The enzyme catalyses Na(+)(in) = Na(+)(out). Activated by a myriad of ligands such as acetylcholine, cytisine, nicotine, choline and epibatidine. Channel potentiation by calcium is stoichiometry-selective, CHRNA4:CHRNB2 nACh receptor is achieved by calcium association with topographically distinct sites framed by anionic residues within the CHRNA4 subunit and between the CHRNA4 and CHRNB2 subunits. nAChR activity is inhibited by the antagonist alpha-conotoxins BuIA, PnIA, GID and MII, small disulfide-constrained peptides from cone snails. Functionally, component of neuronal acetylcholine receptors (nAChRs) that function as pentameric, ligand-gated cation channels with high calcium permeability among other activities. nAChRs are excitatory neurotrasnmitter receptors formed by a collection of nAChR subunits known to mediate synaptic transmission in the nervous system and the neuromuscular junction. Each nAchR subunit confers differential attributes to channel properties, including activation, deactivation and desensitization kinetics, pH sensitivity, cation permeability, and binding to allosteric modulators. CHRNA4 forms heteropentameric neuronal acetylcholine receptors with CHRNB2 and CHRNB4, as well as CHRNA5 and CHRNB3 as accesory subunits. Is the most abundant nAChR subtype expressed in the central nervous system. Found in two major stoichiometric forms,(CHRNA4)3:(CHRNB2)2 and (CHRNA4)2:(CHRNB2)3, the two stoichiometric forms differ in their unitary conductance, calcium permeability, ACh sensitivity and potentiation by divalent cation. Involved in the modulation of calcium-dependent signaling pathways, influences the release of neurotransmitters, including dopamine, glutamate and GABA. In Rattus norvegicus (Rat), this protein is Neuronal acetylcholine receptor subunit alpha-4 (Chrna4).